Reading from the N-terminus, the 131-residue chain is L-ectoine synthase (131 aa).

This sequence belongs to the ectoine synthase family.

It catalyses the reaction (2S)-4-acetamido-2-aminobutanoate = L-ectoine + H2O. Its pathway is amine and polyamine biosynthesis; ectoine biosynthesis; L-ectoine from L-aspartate 4-semialdehyde: step 3/3. Its function is as follows. Catalyzes the circularization of gamma-N-acetyl-alpha,gamma-diaminobutyric acid (ADABA) to ectoine (1,4,5,6-tetrahydro-2-methyl-4-pyrimidine carboxylic acid), which is an excellent osmoprotectant. The sequence is that of L-ectoine synthase from Nocardia farcinica (strain IFM 10152).